The sequence spans 161 residues: Transcription antitermination protein NusB (161 aa).

Residues methionine 1–serine 22 form a disordered region.

The protein belongs to the NusB family.

Its function is as follows. Involved in transcription antitermination. Required for transcription of ribosomal RNA (rRNA) genes. Binds specifically to the boxA antiterminator sequence of the ribosomal RNA (rrn) operons. This is Transcription antitermination protein NusB from Hydrogenovibrio crunogenus (strain DSM 25203 / XCL-2) (Thiomicrospira crunogena).